Here is a 114-residue protein sequence, read N- to C-terminus: Tail hub protein B (114 aa).

Heterotrimer with THA. The heterotrimers further assemble as 12 docking hubs that anchor the trimeric tail fibers.

The protein resides in the virion. In terms of biological role, forms the tail hub together with tail hub protein A (THA). The sequence is that of Tail hub protein B from Bacteroides intestinalis (Bacteroides phage PhiCrAss001).